Consider the following 223-residue polypeptide: MAPAPVPALGTLGCYRFLFNPRQHLGPSFPARRYGAPRRLCFLPQNTGTPLRVLPSVFWSPPSRKKPVLSARNSRMFGHLSPVRIPHLRGKFNLRLPSLDEQVIPARLPKMEVRAEEPKEATEVKDQVETQEQEDNKRGPCSNGEAASTSRPLETQGNPTSPRYNPRPLEGNVQLKSLTENNQTDKAQVHAVSFYSKGHGVASSHSPAGGFPRGRTPPARQHG.

Residues 110-138 (KMEVRAEEPKEATEVKDQVETQEQEDNKR) show a composition bias toward basic and acidic residues. Residues 110–223 (KMEVRAEEPK…GRTPPARQHG (114 aa)) form a disordered region. Polar residues-rich tracts occupy residues 145–163 (EAASTSRPLETQGNPTSPR) and 174–186 (QLKSLTENNQTDK).

Belongs to the UPF0607 family.

This chain is Putative UPF0607 protein LOC392364, found in Homo sapiens (Human).